Here is a 542-residue protein sequence, read N- to C-terminus: Anaerobic glycerol-3-phosphate dehydrogenase subunit A (542 aa).

10 to 38 (DVIIIGGGATGAGIARDCALRGLRVILVE) provides a ligand contact to FAD.

The protein belongs to the FAD-dependent glycerol-3-phosphate dehydrogenase family. In terms of assembly, composed of a catalytic GlpA/B dimer and of membrane bound GlpC. The cofactor is FAD. It depends on FMN as a cofactor.

It is found in the cell inner membrane. The enzyme catalyses a quinone + sn-glycerol 3-phosphate = dihydroxyacetone phosphate + a quinol. It functions in the pathway polyol metabolism; glycerol degradation via glycerol kinase pathway; glycerone phosphate from sn-glycerol 3-phosphate (anaerobic route): step 1/1. Its function is as follows. Conversion of glycerol 3-phosphate to dihydroxyacetone. Uses fumarate or nitrate as electron acceptor. This Escherichia coli O157:H7 protein is Anaerobic glycerol-3-phosphate dehydrogenase subunit A (glpA).